Consider the following 667-residue polypeptide: Bifunctional polymyxin resistance protein ArnA (667 aa).

The tract at residues 1–304 is formyltransferase ArnAFT; it reads MKAIVFAYHD…EMGIVTDVRL (304 aa). The active-site Proton donor; for formyltransferase activity is the His-104. (6R)-10-formyltetrahydrofolate-binding positions include Arg-114 and 136-140; that span reads VKKAD. A dehydrogenase ArnADH region spans residues 314 to 667; it reads RRTRVLILGV…TAAPKDELNA (354 aa). NAD(+)-binding positions include Asp-347 and 368–369; that span reads DI. UDP-alpha-D-glucuronate contacts are provided by residues Ala-393, Tyr-398, and 432 to 433; that span reads TS. Residue Glu-434 is the Proton acceptor; for decarboxylase activity of the active site. UDP-alpha-D-glucuronate contacts are provided by residues Arg-460, Asn-492, 526-535, and Tyr-613; that span reads KLVDGGAQKR. The active-site Proton donor; for decarboxylase activity is Arg-619.

The protein in the N-terminal section; belongs to the Fmt family. UDP-L-Ara4N formyltransferase subfamily. In the C-terminal section; belongs to the NAD(P)-dependent epimerase/dehydratase family. UDP-glucuronic acid decarboxylase subfamily. Homohexamer, formed by a dimer of trimers.

The catalysed reaction is UDP-alpha-D-glucuronate + NAD(+) = UDP-beta-L-threo-pentopyranos-4-ulose + CO2 + NADH. It carries out the reaction UDP-4-amino-4-deoxy-beta-L-arabinose + (6R)-10-formyltetrahydrofolate = UDP-4-deoxy-4-formamido-beta-L-arabinose + (6S)-5,6,7,8-tetrahydrofolate + H(+). The protein operates within nucleotide-sugar biosynthesis; UDP-4-deoxy-4-formamido-beta-L-arabinose biosynthesis; UDP-4-deoxy-4-formamido-beta-L-arabinose from UDP-alpha-D-glucuronate: step 1/3. Its pathway is nucleotide-sugar biosynthesis; UDP-4-deoxy-4-formamido-beta-L-arabinose biosynthesis; UDP-4-deoxy-4-formamido-beta-L-arabinose from UDP-alpha-D-glucuronate: step 3/3. It functions in the pathway bacterial outer membrane biogenesis; lipopolysaccharide biosynthesis. Functionally, bifunctional enzyme that catalyzes the oxidative decarboxylation of UDP-glucuronic acid (UDP-GlcUA) to UDP-4-keto-arabinose (UDP-Ara4O) and the addition of a formyl group to UDP-4-amino-4-deoxy-L-arabinose (UDP-L-Ara4N) to form UDP-L-4-formamido-arabinose (UDP-L-Ara4FN). The modified arabinose is attached to lipid A and is required for resistance to polymyxin and cationic antimicrobial peptides. The protein is Bifunctional polymyxin resistance protein ArnA of Yersinia pseudotuberculosis serotype O:3 (strain YPIII).